Reading from the N-terminus, the 281-residue chain is Pantothenate synthetase (281 aa).

ATP is bound at residue 30 to 37 (MGNLHAGH). H37 functions as the Proton donor in the catalytic mechanism. Q61 serves as a coordination point for (R)-pantoate. Position 61 (Q61) interacts with beta-alanine. Residue 149–152 (GRKD) participates in ATP binding. Q155 lines the (R)-pantoate pocket. Residues V178 and 186 to 189 (MSSR) each bind ATP.

It belongs to the pantothenate synthetase family. In terms of assembly, homodimer.

It localises to the cytoplasm. It carries out the reaction (R)-pantoate + beta-alanine + ATP = (R)-pantothenate + AMP + diphosphate + H(+). Its pathway is cofactor biosynthesis; (R)-pantothenate biosynthesis; (R)-pantothenate from (R)-pantoate and beta-alanine: step 1/1. Its function is as follows. Catalyzes the condensation of pantoate with beta-alanine in an ATP-dependent reaction via a pantoyl-adenylate intermediate. This chain is Pantothenate synthetase, found in Shewanella amazonensis (strain ATCC BAA-1098 / SB2B).